Reading from the N-terminus, the 496-residue chain is MTARVLMVQGTSSSAGKSLIVAGLCRLYARRGFRVAPFKSQNMALNSYATPDGREIGRAQALQAEAAGVPPHVDMNPILLKPTGEAGSQVVLLGRPLGVYKPANYYALKEKLWPLAAAALDRLRADADLVFAEGAGSPAEINLRPHDIANMEVALYAGASVLLVGDIERGGVFASLLGTMELLAERERELVAGFVVNKFRGDEELLRPGLALIGARTGRPVLGVLPYLHDLHLDEEDSVGLSGRGKAPAPGDLAVAVIRLPRISNYTDFLPLETENGVALCYVDRPQELDGAHAVILPGSKETLADLAWLRRRGLDRALRDFAARGKPLLGICGGFQMLGRTIREGGQTVAGLGLLPVRTRFASEKRTVQVRGVTAEGVWGIPGGLSVRGYEIHRGFSEVCGGRPCFLLGGQGTGLAPEGCAAEEGYVAGTYLHGCFDSDTYRTQWIAAVRRLAGLPARPSEQPGFAARRQRDLDRIADLLAERIGVERLDGILGL.

One can recognise a GATase cobBQ-type domain in the interval 252–442; sequence DLAVAVIRLP…LHGCFDSDTY (191 aa). Cys-333 (nucleophile) is an active-site residue. His-434 is a catalytic residue.

Belongs to the CobB/CobQ family. CobQ subfamily.

It participates in cofactor biosynthesis; adenosylcobalamin biosynthesis. Catalyzes amidations at positions B, D, E, and G on adenosylcobyrinic A,C-diamide. NH(2) groups are provided by glutamine, and one molecule of ATP is hydrogenolyzed for each amidation. This is Cobyric acid synthase from Desulforudis audaxviator (strain MP104C).